Reading from the N-terminus, the 628-residue chain is Glutamyl-tRNA(Gln) amidotransferase subunit E (628 aa).

This sequence belongs to the GatB/GatE family. GatE subfamily. Heterodimer of GatD and GatE.

It catalyses the reaction L-glutamyl-tRNA(Gln) + L-glutamine + ATP + H2O = L-glutaminyl-tRNA(Gln) + L-glutamate + ADP + phosphate + H(+). In terms of biological role, allows the formation of correctly charged Gln-tRNA(Gln) through the transamidation of misacylated Glu-tRNA(Gln) in organisms which lack glutaminyl-tRNA synthetase. The reaction takes place in the presence of glutamine and ATP through an activated gamma-phospho-Glu-tRNA(Gln). The GatDE system is specific for glutamate and does not act on aspartate. In Pyrococcus furiosus (strain ATCC 43587 / DSM 3638 / JCM 8422 / Vc1), this protein is Glutamyl-tRNA(Gln) amidotransferase subunit E.